The chain runs to 245 residues: 1-(5-phosphoribosyl)-5-[(5-phosphoribosylamino)methylideneamino] imidazole-4-carboxamide isomerase (245 aa).

Catalysis depends on Asp7, which acts as the Proton acceptor. Asp129 functions as the Proton donor in the catalytic mechanism.

The protein belongs to the HisA/HisF family.

Its subcellular location is the cytoplasm. It catalyses the reaction 1-(5-phospho-beta-D-ribosyl)-5-[(5-phospho-beta-D-ribosylamino)methylideneamino]imidazole-4-carboxamide = 5-[(5-phospho-1-deoxy-D-ribulos-1-ylimino)methylamino]-1-(5-phospho-beta-D-ribosyl)imidazole-4-carboxamide. It participates in amino-acid biosynthesis; L-histidine biosynthesis; L-histidine from 5-phospho-alpha-D-ribose 1-diphosphate: step 4/9. This chain is 1-(5-phosphoribosyl)-5-[(5-phosphoribosylamino)methylideneamino] imidazole-4-carboxamide isomerase, found in Salmonella enteritidis PT4 (strain P125109).